Reading from the N-terminus, the 130-residue chain is uncharacterized protein (130 aa).

Transmembrane regions (helical) follow at residues 35-57 (FLIT…FISL) and 72-91 (IVFF…LLLL).

It is found in the cell membrane. This is an uncharacterized protein from Pasteurella multocida (strain Pm70).